The sequence spans 304 residues: uncharacterized protein (304 aa).

The signal sequence occupies residues 1 to 25 (MVKTAMLGAVALVIALGGTCGVADA). A GP-PDE domain is found at 34 to 303 (PMIVAHRAGT…DSPLAAQQWR (270 aa)).

This is an uncharacterized protein from Mycobacterium tuberculosis (strain CDC 1551 / Oshkosh).